Consider the following 307-residue polypeptide: Protoheme IX farnesyltransferase (307 aa).

9 helical membrane-spanning segments follow: residues 31–51 (VTQLAVFCAIIGMFLATPGMV), 53–73 (WPVLIGGAAGIWLLAGAAFAI), 103–123 (TLVFSAILGGAGMWLLHVYAN), 125–145 (LTMWLTFATFLGYAVVYTILL), 153–173 (IVIGGLSGAMPPALGWAAVAG), 179–199 (AWFLVLIIFTWTPPHFWALAL), 223–243 (LLHILLYTLIMIAATLLPFVY), 246–266 (SGYIYLAAALALGAGFLAYAW), and 285–305 (ILYLSLLFAALLVDHYFKFVP).

It belongs to the UbiA prenyltransferase family. Protoheme IX farnesyltransferase subfamily.

It is found in the cell inner membrane. It carries out the reaction heme b + (2E,6E)-farnesyl diphosphate + H2O = Fe(II)-heme o + diphosphate. Its pathway is porphyrin-containing compound metabolism; heme O biosynthesis; heme O from protoheme: step 1/1. Converts heme B (protoheme IX) to heme O by substitution of the vinyl group on carbon 2 of heme B porphyrin ring with a hydroxyethyl farnesyl side group. The chain is Protoheme IX farnesyltransferase from Cupriavidus taiwanensis (strain DSM 17343 / BCRC 17206 / CCUG 44338 / CIP 107171 / LMG 19424 / R1) (Ralstonia taiwanensis (strain LMG 19424)).